The chain runs to 321 residues: Ribosomal large subunit pseudouridine synthase D (321 aa).

One can recognise an S4 RNA-binding domain in the interval 16 to 93; it reads YRLDYILSKL…IPLNIIYEDN (78 aa). The active site involves aspartate 142.

This sequence belongs to the pseudouridine synthase RluA family.

Its subcellular location is the cytoplasm. The catalysed reaction is uridine(1911/1915/1917) in 23S rRNA = pseudouridine(1911/1915/1917) in 23S rRNA. In terms of biological role, responsible for synthesis of pseudouridine from uracil at positions 1911, 1915 and 1917 in 23S ribosomal RNA. This is Ribosomal large subunit pseudouridine synthase D (rluD) from Blochmanniella floridana.